Reading from the N-terminus, the 335-residue chain is Protein-glutamate methylesterase/protein-glutamine glutaminase 3 (335 aa).

A Response regulatory domain is found at 2-119 (RIGIVNDMPL…GNPQTAAAPL (118 aa)). Position 53 is a 4-aspartylphosphate (Asp53). The CheB-type methylesterase domain occupies 144–335 (PKAGGARQRL…IAPRLAEVFD (192 aa)). Active-site residues include Ser159, His186, and Asp279.

This sequence belongs to the CheB family. In terms of processing, phosphorylated by CheA. Phosphorylation of the N-terminal regulatory domain activates the methylesterase activity.

Its subcellular location is the cytoplasm. It carries out the reaction [protein]-L-glutamate 5-O-methyl ester + H2O = L-glutamyl-[protein] + methanol + H(+). The catalysed reaction is L-glutaminyl-[protein] + H2O = L-glutamyl-[protein] + NH4(+). Its function is as follows. Involved in chemotaxis. Part of a chemotaxis signal transduction system that modulates chemotaxis in response to various stimuli. Catalyzes the demethylation of specific methylglutamate residues introduced into the chemoreceptors (methyl-accepting chemotaxis proteins or MCP) by CheR. Also mediates the irreversible deamidation of specific glutamine residues to glutamic acid. The polypeptide is Protein-glutamate methylesterase/protein-glutamine glutaminase 3 (Pseudomonas aeruginosa (strain ATCC 15692 / DSM 22644 / CIP 104116 / JCM 14847 / LMG 12228 / 1C / PRS 101 / PAO1)).